Reading from the N-terminus, the 181-residue chain is RNA pyrophosphohydrolase (181 aa).

In terms of domain architecture, Nudix hydrolase spans 6–150 (GYRPNVGIII…KCEVYRCALK (145 aa)). The short motif at 38 to 59 (GGIKEGETPEQAMYRELYEEVG) is the Nudix box element.

Belongs to the Nudix hydrolase family. RppH subfamily. The cofactor is a divalent metal cation.

Its function is as follows. Accelerates the degradation of transcripts by removing pyrophosphate from the 5'-end of triphosphorylated RNA, leading to a more labile monophosphorylated state that can stimulate subsequent ribonuclease cleavage. This Psychromonas ingrahamii (strain DSM 17664 / CCUG 51855 / 37) protein is RNA pyrophosphohydrolase.